Here is a 106-residue protein sequence, read N- to C-terminus: Thioredoxin (106 aa).

The region spanning 1–106 (GATVKVTNAT…RLAAFLDASL (106 aa)) is the Thioredoxin domain. A disulfide bond links Cys-31 and Cys-34.

It belongs to the thioredoxin family.

Participates in various redox reactions through the reversible oxidation of its active center dithiol to a disulfide and catalyzes dithiol-disulfide exchange reactions. The chain is Thioredoxin (trxA) from Kitasatospora aureofaciens (Streptomyces aureofaciens).